Here is a 460-residue protein sequence, read N- to C-terminus: MDFYNHAANILSDLSKKKGSIKQLAFNSKKHDPKRTYALVCETLKYKPVLDEIIARSELLVLEKKLKENLARVLVHDLLMSKRGLSISNGPIKECILRHKTRLNAEFVKLKVKKGVKSHEELALKNPVSLPRWLRINTIKSTKDEVLQGLGLDKVSSIEELGPDKFYIDDCVENLIAIDPSFPIVENSLYKEGKVIIQDKASCFPAAVLAGLTGHVGDIIDGCAAPGNKTTHLAACFPKSHIFAFERDAKRVQTLRKMVGISGANNVTIEHQDFTLTDPKSDLYRNVTHILLDPSCSGSGIVSRQDYLLGNEQDVTEDTERLENLCSFQSTILKHALQFPNCRHVTYSTCSVHRLENEQVVCEVLSQEPDWKCNSLTKTLPNWKTRGIPEYCAQPSMAEGMIRCKPGAGGTIGFFVANLYHPQREQETFKMYKNDDDTKKRKRKKKKKEVKKKARIQGEE.

S-adenosyl-L-methionine-binding positions include 223-229 (CAAPGNK), Glu246, Asp273, and Asp293. Residue Cys350 is the Nucleophile of the active site. Residues 430 to 439 (KMYKNDDDTK) show a composition bias toward basic and acidic residues. Positions 430–460 (KMYKNDDDTKKRKRKKKKKEVKKKARIQGEE) are disordered. The segment covering 440–460 (KRKRKKKKKEVKKKARIQGEE) has biased composition (basic residues).

Belongs to the class I-like SAM-binding methyltransferase superfamily. RsmB/NOP family. As to quaternary structure, interacts with trm112.

The protein localises to the nucleus. It is found in the nucleolus. It catalyses the reaction a cytidine in 25S rRNA + S-adenosyl-L-methionine = a 5-methylcytidine in 25S rRNA + S-adenosyl-L-homocysteine + H(+). In terms of biological role, S-adenosyl-L-methionine-dependent methyltransferase that specifically methylates the C(5) position of a cytosine in 25S rRNA. The chain is 25S rRNA (cytosine-C(5))-methyltransferase rcm1 (rcm1) from Schizosaccharomyces pombe (strain 972 / ATCC 24843) (Fission yeast).